The chain runs to 577 residues: Isocitrate dehydrogenase kinase/phosphatase (577 aa).

Residues 318-324 (APGVRGM) and K339 contribute to the ATP site. The active site involves D374.

This sequence belongs to the AceK family.

It is found in the cytoplasm. It catalyses the reaction L-seryl-[isocitrate dehydrogenase] + ATP = O-phospho-L-seryl-[isocitrate dehydrogenase] + ADP + H(+). Bifunctional enzyme which can phosphorylate or dephosphorylate isocitrate dehydrogenase (IDH) on a specific serine residue. This is a regulatory mechanism which enables bacteria to bypass the Krebs cycle via the glyoxylate shunt in response to the source of carbon. When bacteria are grown on glucose, IDH is fully active and unphosphorylated, but when grown on acetate or ethanol, the activity of IDH declines drastically concomitant with its phosphorylation. This Pseudomonas aeruginosa (strain ATCC 15692 / DSM 22644 / CIP 104116 / JCM 14847 / LMG 12228 / 1C / PRS 101 / PAO1) protein is Isocitrate dehydrogenase kinase/phosphatase.